The chain runs to 149 residues: Large ribosomal subunit protein uL13 (149 aa).

It belongs to the universal ribosomal protein uL13 family. In terms of assembly, part of the 50S ribosomal subunit.

Functionally, this protein is one of the early assembly proteins of the 50S ribosomal subunit, although it is not seen to bind rRNA by itself. It is important during the early stages of 50S assembly. The polypeptide is Large ribosomal subunit protein uL13 (Thermobifida fusca (strain YX)).